A 270-amino-acid polypeptide reads, in one-letter code: Cell division protein DivIB (270 aa).

Over Met-1–His-28 the chain is Cytoplasmic. A helical transmembrane segment spans residues Leu-29–Pro-49. Residues Leu-50–Glu-270 lie on the Extracellular side of the membrane. Residues Ser-51–Phe-119 enclose the POTRA domain.

The protein belongs to the FtsQ/DivIB family. DivIB subfamily.

It is found in the cell membrane. Its function is as follows. Cell division protein that may be involved in stabilizing or promoting the assembly of the division complex. The polypeptide is Cell division protein DivIB (Listeria monocytogenes serovar 1/2a (strain ATCC BAA-679 / EGD-e)).